A 1846-amino-acid chain; its full sequence is Unconventional myosin-Vb (1846 aa).

Residues 8 to 60 (SRYTRVWIPDPDEVWRSAELTKDYKDGDESLQLRLEDDTILDYPIDVQNNQVP) enclose the Myosin N-terminal SH3-like domain. Residues 21–40 (VWRSAELTKDYKDGDESLQL) are requires for interaction with LIMA1. The region spanning 69–763 (VGENDLTALS…QVAYLEKLRA (695 aa)) is the Myosin motor domain. 163-170 (GESGAGKT) provides a ligand contact to ATP. Residues 599 to 629 (VPATNTAKSRSSSKINVRSSRPLMKAPNKEH) are disordered. Positions 607-619 (SRSSSKINVRSSR) are enriched in low complexity. Residues 641-663 (LNLLMETLNATTPHYVRCIKPND) are actin-binding. 6 consecutive IQ domains span residues 767-788 (REAT…KYRR), 789-813 (LRAA…EHLR), 814-837 (RTRA…YCRV), 838-861 (RRAA…PPVL), 862-884 (TEHK…HFQR), and 885-914 (QRDA…EARS). Coiled-coil stretches lie at residues 915-1272 (AEHL…ADQR) and 1334-1450 (LKQV…RHHE). The segment at 1088–1122 (RDEQQTPGHRKNPSNQSSLESDSNYPSISTSEIGD) is disordered. Positions 1100 to 1120 (PSNQSSLESDSNYPSISTSEI) are enriched in polar residues. A Phosphoserine modification is found at Ser-1444. Residues 1524–1801 (SSTINGIKKV…IRTIQAQLQE (278 aa)) form the Dilute domain.

Belongs to the TRAFAC class myosin-kinesin ATPase superfamily. Myosin family. As to quaternary structure, component of the CART complex, at least composed of ACTN4, HGS/HRS, MYO5B and TRIM3. Interacts with RAB11FIP2. Interacts with RAB11A and RAB8A. Found in a complex with CFTR and RAB11A. Interacts with NPC1L1. Interacts with LIMA1.

Its subcellular location is the cytoplasm. Its function is as follows. May be involved in vesicular trafficking via its association with the CART complex. The CART complex is necessary for efficient transferrin receptor recycling but not for EGFR degradation. Required in a complex with RAB11A and RAB11FIP2 for the transport of NPC1L1 to the plasma membrane. Together with RAB11A participates in CFTR trafficking to the plasma membrane and TF (transferrin) recycling in nonpolarized cells. Together with RAB11A and RAB8A participates in epithelial cell polarization. Together with RAB25 regulates transcytosis. Required for proper localization of bile salt export pump ABCB11 at the apical/canalicular plasma membrane of hepatocytes. This chain is Unconventional myosin-Vb (Myo5b), found in Rattus norvegicus (Rat).